We begin with the raw amino-acid sequence, 118 residues long: Small ribosomal subunit protein uS13 (118 aa).

The segment at 94 to 118 (GLPVRGQRTQTNARTRKGPRRLARK) is disordered. Over residues 107-118 (RTRKGPRRLARK) the composition is skewed to basic residues.

The protein belongs to the universal ribosomal protein uS13 family. In terms of assembly, part of the 30S ribosomal subunit. Forms a loose heterodimer with protein S19. Forms two bridges to the 50S subunit in the 70S ribosome.

In terms of biological role, located at the top of the head of the 30S subunit, it contacts several helices of the 16S rRNA. In the 70S ribosome it contacts the 23S rRNA (bridge B1a) and protein L5 of the 50S subunit (bridge B1b), connecting the 2 subunits; these bridges are implicated in subunit movement. Contacts the tRNAs in the A and P-sites. The chain is Small ribosomal subunit protein uS13 from Nitrosococcus oceani (strain ATCC 19707 / BCRC 17464 / JCM 30415 / NCIMB 11848 / C-107).